A 141-amino-acid polypeptide reads, in one-letter code: Ly6/PLAUR domain-containing protein 1 (141 aa).

The first 20 residues, 1 to 20 (MWVLGIAATFCGLFLLPGFA), serve as a signal peptide directing secretion. 6 cysteine pairs are disulfide-bonded: cysteine 25/cysteine 54, cysteine 28/cysteine 37, cysteine 46/cysteine 71, cysteine 77/cysteine 100, cysteine 88/cysteine 97, and cysteine 101/cysteine 106. Residues 25-107 (CYQCEEFQLN…ISCCNTPLCN (83 aa)) form the UPAR/Ly6 domain. Asparagine 45 carries N-linked (GlcNAc...) asparagine glycosylation. Residue serine 117 is the site of GPI-anchor amidated serine attachment. A propeptide spans 118 to 141 (ASALRPGLRTTILFLKLALFSAHC) (removed in mature form).

Interacts with CHRNA4 and nAChRs containing alpha-4:beta-2 (CHRNA4:CHRNB2) and alpha-7 (CHRNA7) subunits.

Its subcellular location is the cell membrane. In terms of biological role, believed to act as a modulator of nicotinic acetylcholine receptors (nAChRs) activity. In vitro increases receptor desensitization and decreases affinity for ACh of alpha-4:beta-2-containing nAChRs. May play a role in the intracellular trafficking of alpha-4:beta-2 and alpha-7-containing nAChRs and may inhibit their expression at the cell surface. May be involved in the control of anxiety. This is Ly6/PLAUR domain-containing protein 1 (LYPD1) from Homo sapiens (Human).